The following is a 273-amino-acid chain: MSATAKKSAAQLQREEEEARKKLKRLSKQGGVEGRLPMKRLFRQRAHANVLSDHELEYPRSPSEMDWSPYYPDFDVESNKKVEIVDIGCGYGGLTVALGPQFPDTLVLGMEIRMQVSDYLKEKIQALRYRADHEEPVPGGYKNISVLRMNCQKFLPNFFEKGQLSKMFFCFPDPHFKARKHKNRIITSTLASEYAYFIRPHGTLYTITDVEELHVWMAQHLDAHPLFRRFTKEEEENDICVTLMTNETEEGKKVARNGGKKFVACYERIPNPK.

The interval 1-32 is disordered; it reads MSATAKKSAAQLQREEEEARKKLKRLSKQGGV. S-adenosyl-L-methionine-binding positions include Gly88, 111-112, 150-151, and Cys170; these read EI and NC. Asp173 is a catalytic residue. 248-250 is a binding site for S-adenosyl-L-methionine; sequence TEE.

This sequence belongs to the class I-like SAM-binding methyltransferase superfamily. TrmB family. Forms a complex with trm82.

The protein localises to the nucleus. The enzyme catalyses guanosine(46) in tRNA + S-adenosyl-L-methionine = N(7)-methylguanosine(46) in tRNA + S-adenosyl-L-homocysteine. It participates in tRNA modification; N(7)-methylguanine-tRNA biosynthesis. In terms of biological role, catalyzes the formation of N(7)-methylguanine at position 46 (m7G46) in tRNA. The protein is tRNA (guanine-N(7)-)-methyltransferase (trm8) of Schizosaccharomyces pombe (strain 972 / ATCC 24843) (Fission yeast).